Here is a 204-residue protein sequence, read N- to C-terminus: Outer-membrane lipoprotein carrier protein (204 aa).

A signal peptide spans 1-21; it reads MKKYLNLTALLLVGISNVTWA.

It belongs to the LolA family. Monomer.

It is found in the periplasm. Participates in the translocation of lipoproteins from the inner membrane to the outer membrane. Only forms a complex with a lipoprotein if the residue after the N-terminal Cys is not an aspartate (The Asp acts as a targeting signal to indicate that the lipoprotein should stay in the inner membrane). The sequence is that of Outer-membrane lipoprotein carrier protein from Histophilus somni (strain 2336) (Haemophilus somnus).